A 282-amino-acid polypeptide reads, in one-letter code: RNA-4 uncharacterized 31.9 kDa protein (282 aa).

In Beta macrocarpa (Beet), this protein is RNA-4 uncharacterized 31.9 kDa protein.